We begin with the raw amino-acid sequence, 506 residues long: Glutamyl-tRNA(Gln) amidotransferase subunit A, mitochondrial (506 aa).

Residues lysine 62 and serine 141 each act as charge relay system in the active site. The Acyl-ester intermediate role is filled by serine 165.

The protein belongs to the amidase family. GatA subfamily. Subunit of the heterotrimeric GatCAB amidotransferase (AdT) complex, composed of A, B and C subunits.

It localises to the mitochondrion. It catalyses the reaction L-glutamyl-tRNA(Gln) + L-glutamine + ATP + H2O = L-glutaminyl-tRNA(Gln) + L-glutamate + ADP + phosphate + H(+). Allows the formation of correctly charged Gln-tRNA(Gln) through the transamidation of misacylated Glu-tRNA(Gln) in the mitochondria. The reaction takes place in the presence of glutamine and ATP through an activated gamma-phospho-Glu-tRNA(Gln). This Emericella nidulans (strain FGSC A4 / ATCC 38163 / CBS 112.46 / NRRL 194 / M139) (Aspergillus nidulans) protein is Glutamyl-tRNA(Gln) amidotransferase subunit A, mitochondrial.